A 130-amino-acid polypeptide reads, in one-letter code: Small ribosomal subunit protein uS9 (130 aa).

The protein belongs to the universal ribosomal protein uS9 family.

This Onion yellows phytoplasma (strain OY-M) protein is Small ribosomal subunit protein uS9.